We begin with the raw amino-acid sequence, 328 residues long: L-tyrosine isonitrile synthase (328 aa).

This sequence belongs to the isocyanide synthase family. In terms of assembly, monomer in solution.

It carries out the reaction D-ribulose 5-phosphate + L-tyrosine = (2S)-3-(4-hydroxyphenyl)-2-isocyanopropanoate + hydroxyacetone + formaldehyde + phosphate + H2O + H(+). Its function is as follows. Involved in the biosynthesis of paerucumarin, a cyclized isocyano derivative of tyrosine. Responsible for the synthesis of the isonitrile group on tyrosine using the C2 of ribulose 5-phosphate as the source of the carbon atom. This is L-tyrosine isonitrile synthase from Pseudomonas aeruginosa (strain ATCC 15692 / DSM 22644 / CIP 104116 / JCM 14847 / LMG 12228 / 1C / PRS 101 / PAO1).